A 415-amino-acid polypeptide reads, in one-letter code: Multidrug resistance protein MdtA (415 aa).

The first 21 residues, 1 to 21, serve as a signal peptide directing secretion; the sequence is MKGSYKSRWVIVIVVVIAAIA. The segment covering 34 to 47 has biased composition (polar residues); that stretch reads SAAPGATKQAQQSP. Disordered regions lie at residues 34-60 and 392-415; these read SAAP…GPLA and EAQS…GARS. The segment covering 399-415 has biased composition (basic and acidic residues); the sequence is PEEKATSREYAKKGARS.

Belongs to the membrane fusion protein (MFP) (TC 8.A.1) family. As to quaternary structure, part of a tripartite efflux system composed of MdtA, MdtB and MdtC.

The protein localises to the cell inner membrane. In terms of biological role, the MdtABC tripartite complex confers resistance against novobiocin and deoxycholate. The polypeptide is Multidrug resistance protein MdtA (Escherichia fergusonii (strain ATCC 35469 / DSM 13698 / CCUG 18766 / IAM 14443 / JCM 21226 / LMG 7866 / NBRC 102419 / NCTC 12128 / CDC 0568-73)).